The following is a 525-amino-acid chain: MATLLRSLALFKRNKDKPPITSGSGGAIRGIKHIIIVPIPGDSSITTRSRLLDRLVRLIGNPDVSGPKLTGALIGILSLFVESPGQLIQRITDDPDVSIRLLEVVQSDQSQSGLTFASRGTNMEDEADKYFSHDDPISSDQSRFGWFENKEISDIEVQDPEGFNMILGTILAQIWVLLAKAVTAPDTAADSELRRWIKYTQQRRVVGEFRLERKWLDVVRNRIAEDLSLRRFMVALILDIKRTPGNKPRIAEMICDIDTYIVEAGLASFILTIKFGIETMYPALGLHEFAGELSTLESLMNLYQQMGETAPYMVNLENSIQNKFSAGSYPLLWSYAMGVGVELENSMGGLNFGRSYFDPAYFRLGQEMVRRSAGKVSSTLASELGITAEDARLVSEIAMHTTEDKISRAVGPRQAQVSFLHGDQSENELPRLGGKEDRRVKQSRGEARESYRETGPSRASDARAAHLPTGTPLDIDTASESSQDPQDSRRSADALLRLQAMAGISEEQGSDTDTPIVYNDRNLLD.

Residues 1-36 form a homomultimerization region; the sequence is MATLLRSLALFKRNKDKPPITSGSGGAIRGIKHIII. The segment at 1–375 is RNA packaging and organization of the helical nucleocapsid; the sequence is MATLLRSLAL…QEMVRRSAGK (375 aa). The tract at residues 1 to 403 is ncore; sequence MATLLRSLAL…VSEIAMHTTE (403 aa). Residues 70 to 77 carry the Nuclear localization signal motif; that stretch reads TGALIGIL. Residues K180, R195, Q202, and Y260 each contribute to the RNA site. At T279 the chain carries Phosphothreonine; by host. N351 is an RNA binding site. A homomultimerization region spans residues 373–391; sequence AGKVSSTLASELGITAEDA. The ntail stretch occupies residues 404–525; that stretch reads DKISRAVGPR…IVYNDRNLLD (122 aa). The tract at residues 418 to 525 is disordered; it reads SFLHGDQSEN…IVYNDRNLLD (108 aa). The short motif at 425-440 is the Nuclear export signal element; sequence SENELPRLGGKEDRRV. Positions 433–452 are enriched in basic and acidic residues; sequence GGKEDRRVKQSRGEARESYR. Positions 477-505 are interaction with the phosphoprotein; it reads TASESSQDPQDSRRSADALLRLQAMAGIS.

The protein belongs to the paramyxoviruses nucleocapsid family. Homomultimer; forms the nucleocapsid. Binds to viral genomic RNA. N0 interacts (via Ncore) with the phosphoprotein (via N-terminus); this interaction allows P to chaperon N0 to avoid N polymerization and non-specific RNA binding before encapsidation. Interacts (via the Ntail) as N-RNA template with the phosphoprotein (via C-terminus XD); this interaction maintains the P/L complex anchored to the nucleocapsid template during the sequential transcription. Interacts with the phosphoprotein; this interaction leads to the formation of membraneless organelles that function as viral replication factories. Interacts with human FCGR2B protein. Interacts with human PPIA/CYPA and PPIB/CYPB. In terms of processing, phosphorylation at Thr-279 is required for the formation of the nucleocapsid.

Its subcellular location is the virion. The protein resides in the host cytoplasm. The protein localises to the host nucleus. Forms the helical nucleocapsid (NC) in a ratio of 1 N per 6 ribonucleotides, protecting the genome from nucleases. The nucleocapsid (NC) has a helical structure with either 12.35 or 11.64 N per turn, approximately 20 nm in diameter, with a hollow central cavity approximately 5 nm in diameter. The encapsidated genomic RNA serves as template for transcription and replication; encapsidation by N is coupled to RNA synthesis. Forms the encapsidation complex with the phosphoprotein protein P. Before encapsidation, the newly synthesized free N protein, so-called N0, is chaperoned by P. Participates, together with P, in the formation of viral factories (viroplasms), which are large inclusions in the host cytoplasm where replication takes place. N is released in the blood following lysis of measles infected cells, it interacts then with human FCGR2B on immune cells, inducing apoptosis and blocking inflammatory immune response. This is Nucleoprotein (N) from Homo sapiens (Human).